The primary structure comprises 375 residues: Probable cytochrome c oxidase subunit 2 (375 aa).

The next 3 helical transmembrane spans lie at leucine 36–tryptophan 56, isoleucine 80–phenylalanine 100, and leucine 122–valine 142. 4 residues coordinate Cu cation: histidine 264, cysteine 305, cysteine 309, and histidine 313. Residues valine 353–aspartate 363 are compositionally biased toward polar residues. Residues valine 353–glutamate 375 form a disordered region.

Belongs to the cytochrome c oxidase subunit 2 family. Cu cation is required as a cofactor. It depends on heme as a cofactor.

It localises to the cell membrane. It catalyses the reaction 4 Fe(II)-[cytochrome c] + O2 + 8 H(+)(in) = 4 Fe(III)-[cytochrome c] + 2 H2O + 4 H(+)(out). Functionally, subunits I and II form the functional core of the enzyme complex. Electrons originating in cytochrome c are transferred via heme a and Cu(A) to the binuclear center formed by heme a3 and Cu(B). The chain is Probable cytochrome c oxidase subunit 2 (ctaC) from Nocardia farcinica (strain IFM 10152).